The primary structure comprises 34 residues: Photosystem II reaction center protein M (34 aa).

The helical transmembrane segment at 5 to 25 (ILAFIAIVLFISVPTAFLLII) threads the bilayer.

Belongs to the PsbM family. As to quaternary structure, PSII is composed of 1 copy each of membrane proteins PsbA, PsbB, PsbC, PsbD, PsbE, PsbF, PsbH, PsbI, PsbJ, PsbK, PsbL, PsbM, PsbT, PsbX, PsbY, PsbZ, Psb30/Ycf12, at least 3 peripheral proteins of the oxygen-evolving complex and a large number of cofactors. It forms dimeric complexes.

It is found in the plastid. The protein localises to the chloroplast thylakoid membrane. One of the components of the core complex of photosystem II (PSII). PSII is a light-driven water:plastoquinone oxidoreductase that uses light energy to abstract electrons from H(2)O, generating O(2) and a proton gradient subsequently used for ATP formation. It consists of a core antenna complex that captures photons, and an electron transfer chain that converts photonic excitation into a charge separation. This subunit is found at the monomer-monomer interface. The chain is Photosystem II reaction center protein M from Cycas taitungensis (Prince sago).